Consider the following 457-residue polypeptide: Multidrug resistance protein MdtK (457 aa).

Residues 1-10 (MQKYISEARL) lie on the Cytoplasmic side of the membrane. Residues 11–31 (LLALAIPVILAQIAQTAMGFV) form a helical membrane-spanning segment. Residues 32-52 (DTVMAGGYSATDMAAVAIGTS) lie on the Periplasmic side of the membrane. Residues 53–73 (IWLPAILFGHGLLLALTPVIA) traverse the membrane as a helical segment. Over 74–92 (QLNGSGRRERIAHQVRQGF) the chain is Cytoplasmic. Residues 93–113 (WLAGFVSVLIMLVLWNAGYII) traverse the membrane as a helical segment. The Periplasmic segment spans residues 114-126 (RSMENIDPALADK). The helical transmembrane segment at 127-147 (AVGYLRALLWGAPGYLFFQVA) threads the bilayer. Residues 148–159 (RNQCEGLAKTKP) lie on the Cytoplasmic side of the membrane. The chain crosses the membrane as a helical span at residues 160–180 (GMVMGFIGLLVNIPVNYIFIY). Over 181–191 (GHFGMPELSGV) the chain is Periplasmic. Residues 192–212 (GCGVATAAVYWAMFLAMVSYI) form a helical membrane-spanning segment. Residues 213–242 (KRARSMRDIRNEKGTAKPDPAVMKRLIQLG) lie on the Cytoplasmic side of the membrane. Residues 243–263 (LPIALALFFEVTLFAVVALLV) traverse the membrane as a helical segment. The Periplasmic portion of the chain corresponds to 264–275 (SPLGIVDVAGHQ). The chain crosses the membrane as a helical span at residues 276-296 (IALNFSSLMFVLPMSLAAAVT). Topologically, residues 297-313 (IRVGYRLGQGSTLDAQT) are cytoplasmic. A helical transmembrane segment spans residues 314-334 (AARTGLMVGVCMATLTAIFTV). The Periplasmic segment spans residues 335–349 (SLREQIALLYNDNPE). A helical transmembrane segment spans residues 350 to 370 (VVTLAAHLMLLAAVYQISDSI). The Cytoplasmic portion of the chain corresponds to 371–386 (QVIGSGILRGYKDTRS). A helical membrane pass occupies residues 387–407 (IFYITFTAYWVLGLPSGYILA). The Periplasmic portion of the chain corresponds to 408 to 417 (LTDLVVEPMG). The chain crosses the membrane as a helical span at residues 418–438 (PAGFWIGFIIGLTSAAIMMML). Residues 439-457 (RMRFLQRLPSAIILQRASR) are Cytoplasmic-facing.

It belongs to the multi antimicrobial extrusion (MATE) (TC 2.A.66.1) family. MdtK subfamily.

Its subcellular location is the cell inner membrane. Multidrug efflux pump that functions probably as a Na(+)/drug antiporter. This Shigella dysenteriae serotype 1 (strain Sd197) protein is Multidrug resistance protein MdtK.